We begin with the raw amino-acid sequence, 74 residues long: Cytochrome c oxidase subunit 3 (74 aa).

A run of 2 helical transmembrane segments spans residues 15 to 37 and 42 to 59; these read SPWP…KWFH and SLFL…YQWW.

It belongs to the cytochrome c oxidase subunit 3 family. As to quaternary structure, component of the cytochrome c oxidase (complex IV, CIV), a multisubunit enzyme composed of a catalytic core of 3 subunits and several supernumerary subunits. The complex exists as a monomer or a dimer and forms supercomplexes (SCs) in the inner mitochondrial membrane with ubiquinol-cytochrome c oxidoreductase (cytochrome b-c1 complex, complex III, CIII).

It is found in the mitochondrion inner membrane. It catalyses the reaction 4 Fe(II)-[cytochrome c] + O2 + 8 H(+)(in) = 4 Fe(III)-[cytochrome c] + 2 H2O + 4 H(+)(out). In terms of biological role, component of the cytochrome c oxidase, the last enzyme in the mitochondrial electron transport chain which drives oxidative phosphorylation. The respiratory chain contains 3 multisubunit complexes succinate dehydrogenase (complex II, CII), ubiquinol-cytochrome c oxidoreductase (cytochrome b-c1 complex, complex III, CIII) and cytochrome c oxidase (complex IV, CIV), that cooperate to transfer electrons derived from NADH and succinate to molecular oxygen, creating an electrochemical gradient over the inner membrane that drives transmembrane transport and the ATP synthase. Cytochrome c oxidase is the component of the respiratory chain that catalyzes the reduction of oxygen to water. Electrons originating from reduced cytochrome c in the intermembrane space (IMS) are transferred via the dinuclear copper A center (CU(A)) of subunit 2 and heme A of subunit 1 to the active site in subunit 1, a binuclear center (BNC) formed by heme A3 and copper B (CU(B)). The BNC reduces molecular oxygen to 2 water molecules using 4 electrons from cytochrome c in the IMS and 4 protons from the mitochondrial matrix. This Drosophila simulans (Fruit fly) protein is Cytochrome c oxidase subunit 3 (mt:CoIII).